A 97-amino-acid chain; its full sequence is Small ribosomal subunit protein bS6 (97 aa).

It belongs to the bacterial ribosomal protein bS6 family.

In terms of biological role, binds together with bS18 to 16S ribosomal RNA. In Dictyoglomus turgidum (strain DSM 6724 / Z-1310), this protein is Small ribosomal subunit protein bS6.